Here is a 315-residue protein sequence, read N- to C-terminus: tRNA pseudouridine synthase B (315 aa).

Residue Asp-54 is the Nucleophile of the active site.

It belongs to the pseudouridine synthase TruB family. Type 1 subfamily.

The enzyme catalyses uridine(55) in tRNA = pseudouridine(55) in tRNA. In terms of biological role, responsible for synthesis of pseudouridine from uracil-55 in the psi GC loop of transfer RNAs. In Cupriavidus pinatubonensis (strain JMP 134 / LMG 1197) (Cupriavidus necator (strain JMP 134)), this protein is tRNA pseudouridine synthase B.